Here is a 94-residue protein sequence, read N- to C-terminus: Integration host factor subunit beta (94 aa).

It belongs to the bacterial histone-like protein family. In terms of assembly, heterodimer of an alpha and a beta chain.

In terms of biological role, this protein is one of the two subunits of integration host factor, a specific DNA-binding protein that functions in genetic recombination as well as in transcriptional and translational control. This Buchnera aphidicola subsp. Acyrthosiphon pisum (strain 5A) protein is Integration host factor subunit beta.